The chain runs to 670 residues: Oxidoreductase PigB (670 aa).

The signal sequence occupies residues 1-19; that stretch reads MIIQRLFGILYMLAGLAKA. 4 consecutive transmembrane segments (helical) span residues 53–73, 76–96, 98–118, and 238–258; these read GDVINILVGVVLFGSGVILML, LWTTLVIYAQLLMMAVFVVIL, QSQPQVMLLDGVFALAALYML, and LVFFDTFLLLKCLGEIVVGFI.

The protein belongs to the flavin monoamine oxidase family. The cofactor is FAD.

It is found in the membrane. The protein operates within antibiotic biosynthesis; prodigiosin biosynthesis. Its function is as follows. Involved in the biosynthesis of 2-methyl-3-n-amyl-pyrrole (MAP), one of the terminal products involved in the biosynthesis of the red antibiotic prodigiosin (Pig). Catalyzes the oxidation of dihydro form of MAP (H2MAP) to yield MAP. This Serratia sp. (strain ATCC 39006) (Prodigiosinella confusarubida) protein is Oxidoreductase PigB.